A 336-amino-acid polypeptide reads, in one-letter code: Ornithine carbamoyltransferase, catabolic (336 aa).

Residues 57–60 (STRT), Gln-84, Arg-108, and 135–138 (HPTQ) each bind carbamoyl phosphate. L-ornithine is bound by residues Asn-168, Asp-232, and 236-237 (SM). Carbamoyl phosphate is bound by residues 274–275 (CL) and Arg-321.

This sequence belongs to the aspartate/ornithine carbamoyltransferase superfamily. OTCase family. As to quaternary structure, nonameric or dodecamer (tetramer of trimers).

The protein resides in the cytoplasm. The enzyme catalyses carbamoyl phosphate + L-ornithine = L-citrulline + phosphate + H(+). The protein operates within amino-acid degradation; L-arginine degradation via ADI pathway; carbamoyl phosphate from L-arginine: step 2/2. Its activity is regulated as follows. Inhibited by 2-aminopentanoic acid (norvaline). Activated by phosphate and nucleoside monophosphates such as AMP, GMP, CMP, UMP. Allosterically inhibited by the polyamines such as spermidine and putrescine. In terms of biological role, involved in the catabolism of arginine. Catalyzes the phosphorolysis of citrulline, the reverse reaction of the biosynthetic one, yielding ornithine and carbamoyl phosphate which serve to generate ATP from ADP. This catabolic OTCase does not carry out the biosynthetic reaction because of a poor affinity and a marked cooperativity for carbamoyl phosphate. The polypeptide is Ornithine carbamoyltransferase, catabolic (Pseudomonas aeruginosa (strain ATCC 15692 / DSM 22644 / CIP 104116 / JCM 14847 / LMG 12228 / 1C / PRS 101 / PAO1)).